The primary structure comprises 155 residues: Aspartate 1-decarboxylase (155 aa).

Serine 24 acts as the Schiff-base intermediate with substrate; via pyruvic acid in catalysis. Position 24 is a pyruvic acid (Ser) (serine 24). Threonine 56 contacts substrate. Tyrosine 57 acts as the Proton donor in catalysis. 72-74 (GAA) lines the substrate pocket.

It belongs to the PanD family. As to quaternary structure, heterooctamer of four alpha and four beta subunits. Requires pyruvate as cofactor. Post-translationally, is synthesized initially as an inactive proenzyme, which is activated by self-cleavage at a specific serine bond to produce a beta-subunit with a hydroxyl group at its C-terminus and an alpha-subunit with a pyruvoyl group at its N-terminus.

The protein localises to the cytoplasm. It carries out the reaction L-aspartate + H(+) = beta-alanine + CO2. Its pathway is cofactor biosynthesis; (R)-pantothenate biosynthesis; beta-alanine from L-aspartate: step 1/1. In terms of biological role, catalyzes the pyruvoyl-dependent decarboxylation of aspartate to produce beta-alanine. The sequence is that of Aspartate 1-decarboxylase from Agrobacterium fabrum (strain C58 / ATCC 33970) (Agrobacterium tumefaciens (strain C58)).